Here is a 245-residue protein sequence, read N- to C-terminus: Proteolipid protein DM alpha (245 aa).

4 helical membrane-spanning segments follow: residues 19-35 (LIAT…FCGC), 71-87 (IIYG…VLLL), 117-133 (FIFL…GVFA), and 204-220 (LFIA…IALL).

This sequence belongs to the myelin proteolipid protein family. As to expression, highly expressed in white matter in myelinating shark brain.

It localises to the membrane. This Squalus acanthias (Spiny dogfish) protein is Proteolipid protein DM alpha.